A 257-amino-acid chain; its full sequence is Trans-aconitate 2-methyltransferase (257 aa).

The protein belongs to the methyltransferase superfamily. Tam family.

Its subcellular location is the cytoplasm. The enzyme catalyses trans-aconitate + S-adenosyl-L-methionine = (E)-3-(methoxycarbonyl)pent-2-enedioate + S-adenosyl-L-homocysteine. Functionally, catalyzes the S-adenosylmethionine monomethyl esterification of trans-aconitate. The chain is Trans-aconitate 2-methyltransferase from Rhizobium meliloti (strain 1021) (Ensifer meliloti).